We begin with the raw amino-acid sequence, 266 residues long: Small ribosomal subunit protein uS2 (266 aa).

The interval 247-266 is disordered; the sequence is EGENNYSNNRSWNKPERTNN. Residues 249–258 are compositionally biased toward polar residues; that stretch reads ENNYSNNRSW.

Belongs to the universal ribosomal protein uS2 family.

This chain is Small ribosomal subunit protein uS2, found in Mesoplasma florum (strain ATCC 33453 / NBRC 100688 / NCTC 11704 / L1) (Acholeplasma florum).